Here is a 252-residue protein sequence, read N- to C-terminus: ATP synthase subunit a (252 aa).

5 helical membrane passes run 33-53 (GQVF…ALAA), 92-112 (VPFV…GALV), 130-150 (DINT…YAGL), 196-216 (LVVG…VMAL), and 217-237 (GLFT…TYIG).

It belongs to the ATPase A chain family. F-type ATPases have 2 components, CF(1) - the catalytic core - and CF(0) - the membrane proton channel. CF(1) has five subunits: alpha(3), beta(3), gamma(1), delta(1), epsilon(1). CF(0) has three main subunits: a(1), b(2) and c(9-12). The alpha and beta chains form an alternating ring which encloses part of the gamma chain. CF(1) is attached to CF(0) by a central stalk formed by the gamma and epsilon chains, while a peripheral stalk is formed by the delta and b chains.

The protein localises to the cellular thylakoid membrane. Key component of the proton channel; it plays a direct role in the translocation of protons across the membrane. In Synechococcus sp. (strain PCC 6716), this protein is ATP synthase subunit a.